A 164-amino-acid chain; its full sequence is ATP synthase subunit b (164 aa).

Residues G6–I26 form a helical membrane-spanning segment.

It belongs to the ATPase B chain family. In terms of assembly, F-type ATPases have 2 components, F(1) - the catalytic core - and F(0) - the membrane proton channel. F(1) has five subunits: alpha(3), beta(3), gamma(1), delta(1), epsilon(1). F(0) has three main subunits: a(1), b(2) and c(10-14). The alpha and beta chains form an alternating ring which encloses part of the gamma chain. F(1) is attached to F(0) by a central stalk formed by the gamma and epsilon chains, while a peripheral stalk is formed by the delta and b chains.

The protein localises to the cell membrane. In terms of biological role, f(1)F(0) ATP synthase produces ATP from ADP in the presence of a proton or sodium gradient. F-type ATPases consist of two structural domains, F(1) containing the extramembraneous catalytic core and F(0) containing the membrane proton channel, linked together by a central stalk and a peripheral stalk. During catalysis, ATP synthesis in the catalytic domain of F(1) is coupled via a rotary mechanism of the central stalk subunits to proton translocation. Its function is as follows. Component of the F(0) channel, it forms part of the peripheral stalk, linking F(1) to F(0). This chain is ATP synthase subunit b, found in Streptococcus pyogenes serotype M6 (strain ATCC BAA-946 / MGAS10394).